Here is a 159-residue protein sequence, read N- to C-terminus: Ribosomal RNA large subunit methyltransferase H (159 aa).

Position 108 (glycine 108) interacts with S-adenosyl-L-methionine.

The protein belongs to the RNA methyltransferase RlmH family. In terms of assembly, homodimer.

Its subcellular location is the cytoplasm. The catalysed reaction is pseudouridine(1915) in 23S rRNA + S-adenosyl-L-methionine = N(3)-methylpseudouridine(1915) in 23S rRNA + S-adenosyl-L-homocysteine + H(+). Functionally, specifically methylates the pseudouridine at position 1915 (m3Psi1915) in 23S rRNA. The sequence is that of Ribosomal RNA large subunit methyltransferase H from Lactobacillus gasseri (strain ATCC 33323 / DSM 20243 / BCRC 14619 / CIP 102991 / JCM 1131 / KCTC 3163 / NCIMB 11718 / NCTC 13722 / AM63).